We begin with the raw amino-acid sequence, 946 residues long: Inter-alpha-trypsin inhibitor heavy chain H2 (946 aa).

Positions 1-18 (MQRPVCLLIWLFLLEAQA) are cleaved as a signal peptide. A propeptide spanning residues 19-54 (FEIPINGNSEFAEYSDLVELAPDKLPFVQENGRHQR) is cleaved from the precursor. One can recognise a VIT domain in the interval 56-185 (LPEESGEETD…KVQFELHYQE (130 aa)). Phosphoserine is present on S60. N-linked (GlcNAc...) asparagine glycans are attached at residues N118 and N263. A 4-carboxyglutamate mark is found at E282 and E283. The VWFA domain occupies 308-468 (PKNILFVIDV…YDFLKRLSNE (161 aa)). N445 is a glycosylation site (N-linked (GlcNAc...) asparagine). S466 is subject to Phosphoserine. Residue D702 is modified to Aspartate 1-(chondroitin 4-sulfate)-ester. The propeptide occupies 703 to 946 (PHFIIYLPKS…PQLYSFLKRP (244 aa)). A Phosphoserine modification is found at S886.

Belongs to the ITIH family. As to quaternary structure, I-alpha-I plasma protease inhibitors are assembled from one or two heavy chains (HC) and one light chain, bikunin. Inter-alpha-inhibitor (I-alpha-I) is composed of ITIH1/HC1, ITIH2/HC2 and bikunin. Heavy chains are linked to bikunin via chondroitin 4-sulfate esterified to the alpha-carboxyl of the C-terminal aspartate after propeptide cleavage. In terms of processing, phosphorylated by FAM20C in the extracellular medium. As to expression, expressed in both liver and brain.

It is found in the secreted. Its function is as follows. May act as a carrier of hyaluronan in serum or as a binding protein between hyaluronan and other matrix protein, including those on cell surfaces in tissues to regulate the localization, synthesis and degradation of hyaluronan which are essential to cells undergoing biological processes. The protein is Inter-alpha-trypsin inhibitor heavy chain H2 (Itih2) of Mus musculus (Mouse).